The chain runs to 294 residues: tRNA dimethylallyltransferase (294 aa).

10 to 17 (GPTAVGKT) provides a ligand contact to ATP. A substrate-binding site is contributed by 12 to 17 (TAVGKT). The segment at 35-38 (DSQQ) is interaction with substrate tRNA.

The protein belongs to the IPP transferase family. In terms of assembly, monomer. Requires Mg(2+) as cofactor.

The enzyme catalyses adenosine(37) in tRNA + dimethylallyl diphosphate = N(6)-dimethylallyladenosine(37) in tRNA + diphosphate. Catalyzes the transfer of a dimethylallyl group onto the adenine at position 37 in tRNAs that read codons beginning with uridine, leading to the formation of N6-(dimethylallyl)adenosine (i(6)A). This chain is tRNA dimethylallyltransferase, found in Streptococcus pneumoniae (strain Hungary19A-6).